The primary structure comprises 22 residues: Superoxide dismutase [Cu-Zn] 2 (22 aa).

Belongs to the Cu-Zn superoxide dismutase family. Homodimer. Cu cation serves as cofactor. It depends on Zn(2+) as a cofactor. Dominant isozyme in roots.

It is found in the cytoplasm. It catalyses the reaction 2 superoxide + 2 H(+) = H2O2 + O2. Functionally, destroys radicals which are normally produced within the cells and which are toxic to biological systems. This chain is Superoxide dismutase [Cu-Zn] 2, found in Picea abies (Norway spruce).